The following is a 197-amino-acid chain: tRNA(Phe) 7-((3-amino-3-carboxypropyl)-4-demethylwyosine(37)-N(4))-methyltransferase (197 aa).

It belongs to the TYW3 family.

The enzyme catalyses 4-demethyl-7-[(3S)-3-amino-3-carboxypropyl]wyosine(37) in tRNA(Phe) + S-adenosyl-L-methionine = 7-[(3S)-3-amino-3-carboxypropyl]wyosine(37) in tRNA(Phe) + S-adenosyl-L-homocysteine + H(+). S-adenosyl-L-methionine-dependent methyltransferase that acts as a component of the wyosine derivatives biosynthesis pathway. Probably methylates N-4 position of wybutosine-86 to produce wybutosine-72. The sequence is that of tRNA(Phe) 7-((3-amino-3-carboxypropyl)-4-demethylwyosine(37)-N(4))-methyltransferase from Thermococcus sibiricus (strain DSM 12597 / MM 739).